The primary structure comprises 222 residues: Thymidylate kinase (222 aa).

10–17 (GLEGAGKS) provides a ligand contact to ATP.

Belongs to the thymidylate kinase family.

It catalyses the reaction dTMP + ATP = dTDP + ADP. Phosphorylation of dTMP to form dTDP in both de novo and salvage pathways of dTTP synthesis. The protein is Thymidylate kinase of Alteromonas mediterranea (strain DSM 17117 / CIP 110805 / LMG 28347 / Deep ecotype).